A 239-amino-acid polypeptide reads, in one-letter code: Lactate utilization protein A 2 (239 aa).

Belongs to the LutA/YkgE family.

Its function is as follows. Is involved in L-lactate degradation and allows cells to grow with lactate as the sole carbon source. The polypeptide is Lactate utilization protein A 2 (Bacillus mycoides (strain KBAB4) (Bacillus weihenstephanensis)).